Consider the following 369-residue polypeptide: MAGGEVVAVAAAAAGTSRTVLVTGGAGYIGSHTVLQLLAAGFRVVVADSLGNSSELAVRRVAALAGDKARNLSLHKVDIRDKGGLEKVFSSTRFDAVVHFAGLKAVGESVQKPLLYYDHNVAGTIILLEVMAAHGCKKLVFSSSAAVYGSPKNSPCTEEFPLTPHNPYGRTKLIAEEICRDIYHSDSEWSIILLRYFNPVGAHPSGYLGEDPCGIPNNLMPFVQQVAVGRRPSLTIFGNDYATKDGTGVRDYIHVVDLAEGHIAALRKLFESSIGCQAYNLGTGKGTSVLEIVNAFEKVSGKKIPLVIGPRRPGDAEILFSSAAKAEREFKWKAKYGIEEMCRDQWNWASKNPFGYASPDSTKQNGHSH.

Residue 19–50 (TVLVTGGAGYIGSHTVLQLLAAGFRVVVADSL) coordinates NAD(+). Ser144 contacts substrate. Residue Tyr168 is the Proton acceptor of the active site.

Belongs to the NAD(P)-dependent epimerase/dehydratase family. It depends on NAD(+) as a cofactor.

The enzyme catalyses UDP-alpha-D-glucose = UDP-alpha-D-galactose. The protein operates within carbohydrate metabolism; galactose metabolism. Catalyzes the interconversion between UDP-glucose and UDP-galactose. The chain is UDP-glucose 4-epimerase 4 (UGE-4) from Oryza sativa subsp. japonica (Rice).